The sequence spans 191 residues: Protein Ves (191 aa).

It belongs to the Ves family.

The chain is Protein Ves from Escherichia coli O139:H28 (strain E24377A / ETEC).